Reading from the N-terminus, the 338-residue chain is UPF0324 membrane protein TauZ (338 aa).

Helical transmembrane passes span 12 to 31, 36 to 55, 75 to 92, 96 to 118, 125 to 147, 162 to 184, 191 to 213, 223 to 245, 258 to 280, and 315 to 337; these read IEAA…TAQF, YGAP…NFLA, LGVA…LAAL, AIAL…SRLV, ALLT…AAVL, LSVT…FFGF, VFLG…IGPE, LIRV…ARGL, PGFV…PAAV, and AIAL…LHVL.

Belongs to the UPF0324 family.

Its subcellular location is the cell membrane. This Paracoccus denitrificans protein is UPF0324 membrane protein TauZ (tauZ).